A 101-amino-acid chain; its full sequence is Phosphoribosyl-AMP cyclohydrolase (101 aa).

D71 serves as a coordination point for Mg(2+). Residue C72 coordinates Zn(2+). Mg(2+)-binding residues include D73 and D75. Zn(2+) is bound by residues C88 and C95.

The protein belongs to the PRA-CH family. In terms of assembly, homodimer. Mg(2+) is required as a cofactor. Zn(2+) serves as cofactor.

It localises to the cytoplasm. It carries out the reaction 1-(5-phospho-beta-D-ribosyl)-5'-AMP + H2O = 1-(5-phospho-beta-D-ribosyl)-5-[(5-phospho-beta-D-ribosylamino)methylideneamino]imidazole-4-carboxamide. It participates in amino-acid biosynthesis; L-histidine biosynthesis; L-histidine from 5-phospho-alpha-D-ribose 1-diphosphate: step 3/9. Its function is as follows. Catalyzes the hydrolysis of the adenine ring of phosphoribosyl-AMP. The protein is Phosphoribosyl-AMP cyclohydrolase of Bacillus cereus (strain ZK / E33L).